A 37-amino-acid polypeptide reads, in one-letter code: Large ribosomal subunit protein bL36 (37 aa).

Belongs to the bacterial ribosomal protein bL36 family.

The sequence is that of Large ribosomal subunit protein bL36 from Maridesulfovibrio salexigens (strain ATCC 14822 / DSM 2638 / NCIMB 8403 / VKM B-1763) (Desulfovibrio salexigens).